Consider the following 326-residue polypeptide: Homocysteine S-methyltransferase 1 (326 aa).

Residues 9 to 323 (LLEDLIKKCG…STINAISRDL (315 aa)) enclose the Hcy-binding domain. Zn(2+) is bound by residues C241, C308, and C309.

As to quaternary structure, monomer. Zn(2+) is required as a cofactor. As to expression, expressed predominantly in roots. Expressed in rosette leaves, cauline leaves and developing seeds.

It carries out the reaction S-methyl-L-methionine + L-homocysteine = 2 L-methionine + H(+). Strongly inhibited by methionine. In terms of biological role, catalyzes methyl transfer from S-methylmethionine (SMM) to adenosyl-L-homocysteine (AdoMet). SMM degradation (by HMT-1, HMT-2 and HMT-3) and biosynthesis (by MMT1) constitute the SMM cycle in plants, which is probably required to achieve short term control of AdoMet level. This Arabidopsis thaliana (Mouse-ear cress) protein is Homocysteine S-methyltransferase 1 (HMT-1).